Reading from the N-terminus, the 2542-residue chain is Probable polyketide synthase 41 (2542 aa).

The region spanning 11-441 (CNKVAIIGIG…GSNCCLIVSS (431 aa)) is the Ketosynthase family 3 (KS3) domain. Residues C177, H318, and H360 each act as for beta-ketoacyl synthase activity in the active site. Residues 628 to 661 (GIKPSIIVGHSLGEISSSYCSGMIDLDTFCYLIY) are acyl/malonyl transferase. Residue S638 is the For acyl/malonyl transferase activity of the active site. The interval 926–1059 (INHLGISNSN…ANFQLFSRGP (134 aa)) is N-terminal hotdog fold. A PKS/mFAS DH domain is found at 926 to 1231 (INHLGISNSN…FKSTTKIKDP (306 aa)). The Proton acceptor; for dehydratase activity role is filled by H959. The C-terminal hotdog fold stretch occupies residues 1083-1231 (NLTKLSKQEL…FKSTTKIKDP (149 aa)). Catalysis depends on D1145, which acts as the Proton donor; for dehydratase activity. The region spanning 2459–2537 (NVELTVDQLI…SFIQLVKNSM (79 aa)) is the Carrier domain. S2496 is modified (O-(pantetheine 4'-phosphoryl)serine).

It depends on pantetheine 4'-phosphate as a cofactor.

In terms of biological role, probable polyketide synthase. The polypeptide is Probable polyketide synthase 41 (pks41) (Dictyostelium discoideum (Social amoeba)).